The chain runs to 325 residues: Acetyl-coenzyme A carboxylase carboxyl transferase subunit alpha (325 aa).

A CoA carboxyltransferase C-terminal domain is found at 44-298 (QLEARADQLR…KAAIQDNLQA (255 aa)).

This sequence belongs to the AccA family. In terms of assembly, acetyl-CoA carboxylase is a heterohexamer composed of biotin carboxyl carrier protein (AccB), biotin carboxylase (AccC) and two subunits each of ACCase subunit alpha (AccA) and ACCase subunit beta (AccD).

Its subcellular location is the cytoplasm. It catalyses the reaction N(6)-carboxybiotinyl-L-lysyl-[protein] + acetyl-CoA = N(6)-biotinyl-L-lysyl-[protein] + malonyl-CoA. The protein operates within lipid metabolism; malonyl-CoA biosynthesis; malonyl-CoA from acetyl-CoA: step 1/1. Its function is as follows. Component of the acetyl coenzyme A carboxylase (ACC) complex. First, biotin carboxylase catalyzes the carboxylation of biotin on its carrier protein (BCCP) and then the CO(2) group is transferred by the carboxyltransferase to acetyl-CoA to form malonyl-CoA. This Picosynechococcus sp. (strain ATCC 27264 / PCC 7002 / PR-6) (Agmenellum quadruplicatum) protein is Acetyl-coenzyme A carboxylase carboxyl transferase subunit alpha.